The primary structure comprises 404 residues: Argininosuccinate synthase (404 aa).

ATP contacts are provided by residues Ala-10–Ser-18 and Ala-37. The L-citrulline site is built by Tyr-88 and Ser-93. Gly-118 contacts ATP. Residues Thr-120, Asn-124, and Asp-125 each coordinate L-aspartate. Residue Asn-124 coordinates L-citrulline. Residues Arg-128, Ser-179, Ser-188, Glu-264, and Tyr-276 each contribute to the L-citrulline site.

Belongs to the argininosuccinate synthase family. Type 1 subfamily. Homotetramer.

It is found in the cytoplasm. The enzyme catalyses L-citrulline + L-aspartate + ATP = 2-(N(omega)-L-arginino)succinate + AMP + diphosphate + H(+). Its pathway is amino-acid biosynthesis; L-arginine biosynthesis; L-arginine from L-ornithine and carbamoyl phosphate: step 2/3. This chain is Argininosuccinate synthase, found in Nitrosomonas eutropha (strain DSM 101675 / C91 / Nm57).